Reading from the N-terminus, the 557-residue chain is Dihydroxy-acid dehydratase (557 aa).

Mg(2+) is bound at residue Asp78. Cys119 contacts [2Fe-2S] cluster. The Mg(2+) site is built by Asp120 and Lys121. The residue at position 121 (Lys121) is an N6-carboxylysine. Residue Cys192 coordinates [2Fe-2S] cluster. Residue Glu442 coordinates Mg(2+). Ser468 functions as the Proton acceptor in the catalytic mechanism.

It belongs to the IlvD/Edd family. Homodimer. Requires [2Fe-2S] cluster as cofactor. Mg(2+) serves as cofactor.

It carries out the reaction (2R)-2,3-dihydroxy-3-methylbutanoate = 3-methyl-2-oxobutanoate + H2O. The enzyme catalyses (2R,3R)-2,3-dihydroxy-3-methylpentanoate = (S)-3-methyl-2-oxopentanoate + H2O. The protein operates within amino-acid biosynthesis; L-isoleucine biosynthesis; L-isoleucine from 2-oxobutanoate: step 3/4. It functions in the pathway amino-acid biosynthesis; L-valine biosynthesis; L-valine from pyruvate: step 3/4. Functions in the biosynthesis of branched-chain amino acids. Catalyzes the dehydration of (2R,3R)-2,3-dihydroxy-3-methylpentanoate (2,3-dihydroxy-3-methylvalerate) into 2-oxo-3-methylpentanoate (2-oxo-3-methylvalerate) and of (2R)-2,3-dihydroxy-3-methylbutanoate (2,3-dihydroxyisovalerate) into 2-oxo-3-methylbutanoate (2-oxoisovalerate), the penultimate precursor to L-isoleucine and L-valine, respectively. The sequence is that of Dihydroxy-acid dehydratase from Bacillus cereus (strain Q1).